The sequence spans 31 residues: MLTITSYFGFLLAALTITPALFIGLNKIRLI.

Residues 4–24 (ITSYFGFLLAALTITPALFIG) traverse the membrane as a helical segment.

Belongs to the PetL family. As to quaternary structure, the 4 large subunits of the cytochrome b6-f complex are cytochrome b6, subunit IV (17 kDa polypeptide, PetD), cytochrome f and the Rieske protein, while the 4 small subunits are PetG, PetL, PetM and PetN. The complex functions as a dimer.

The protein resides in the plastid. The protein localises to the chloroplast thylakoid membrane. In terms of biological role, component of the cytochrome b6-f complex, which mediates electron transfer between photosystem II (PSII) and photosystem I (PSI), cyclic electron flow around PSI, and state transitions. PetL is important for photoautotrophic growth as well as for electron transfer efficiency and stability of the cytochrome b6-f complex. The protein is Cytochrome b6-f complex subunit 6 of Saccharum barberi (Indian sugarcane).